We begin with the raw amino-acid sequence, 421 residues long: BEN domain-containing protein 5 (421 aa).

K133 bears the N6-acetyllysine mark. Positions 180–243 form a coiled coil; it reads RALYEELLRN…LNRRLQDVLL (64 aa). K258 is covalently cross-linked (Glycyl lysine isopeptide (Lys-Gly) (interchain with G-Cter in SUMO2)). Residues 302-408 form the BEN domain; it reads GSGIWVDEEK…EKIMDINKSC (107 aa).

Functionally, acts as a transcriptional repressor. The protein is BEN domain-containing protein 5 (BEND5) of Homo sapiens (Human).